Reading from the N-terminus, the 147-residue chain is Large ribosomal subunit protein uL13 (147 aa).

The protein belongs to the universal ribosomal protein uL13 family. Part of the 50S ribosomal subunit.

Functionally, this protein is one of the early assembly proteins of the 50S ribosomal subunit, although it is not seen to bind rRNA by itself. It is important during the early stages of 50S assembly. The protein is Large ribosomal subunit protein uL13 of Pseudarthrobacter chlorophenolicus (strain ATCC 700700 / DSM 12829 / CIP 107037 / JCM 12360 / KCTC 9906 / NCIMB 13794 / A6) (Arthrobacter chlorophenolicus).